Consider the following 860-residue polypeptide: M-phase phosphoprotein 8 (860 aa).

The residue at position 1 (M1) is an N-acetylmethionine. S51, S85, S136, and S138 each carry phosphoserine. The region spanning F59–V118 is the Chromo domain. A histone H3K9me3 binding region spans residues W80–D87. The span at N129–Q141 shows a compositional bias: polar residues. A disordered region spans residues N129–E191. Position 144 is a phosphothreonine (T144). Residues S149 and S164 each carry the phosphoserine; by CDK1 modification. Composition is skewed to basic and acidic residues over residues Q159 to K169 and K177 to L186. Phosphoserine occurs at positions 188, 189, and 192. Residues A206–N249 are compositionally biased toward basic and acidic residues. The interval A206–T440 is disordered. Low complexity predominate over residues E259–V268. A phosphoserine mark is found at S266, S272, and S279. Residues E280–L314 are compositionally biased toward basic and acidic residues. Position 319 is a phosphoserine (S319). At T334 the chain carries Phosphothreonine; by CDK1. Positions R336 to K377 are enriched in basic and acidic residues. T385 is subject to Phosphothreonine; by CDK1. A phosphoserine mark is found at S392, S400, and S403. Residues K408 to T440 are compositionally biased toward basic and acidic residues. The interval G431–A560 is interaction with humanin. T454 bears the Phosphothreonine mark. The tract at residues K458–T496 is disordered. ANK repeat units lie at residues S600–G629, N633–V662, N666–I695, and H699–R728.

Homodimer. Interacts (via chromo domain) with histone H3K9me3. Has the highest affinity for H3K9me3, and lesser affinity for H3K9me2 and H3K9me1. Component of the HUSH complex; at least composed of TASOR, PPHLN1 and MPHOSPH8. Interacts with DNMT3, EHMT1 and SETDB1. Interacts with MORC2; the interaction associateS MORC2 with the HUSH complex which recruits MORC2 to heterochromatic loci. Interacts with ZNF638; leading to recruitment of the HUSH complex to unintegrated retroviral DNA. Interacts with TASOR. Interacts with humanin. In terms of processing, phosphorylated in M (mitotic) phase. Phosphorylation by CDK1 promotes dissociation from chromatin.

It is found in the nucleus. The protein resides in the chromosome. Its function is as follows. Heterochromatin component that specifically recognizes and binds methylated 'Lys-9' of histone H3 (H3K9me) and promotes recruitment of proteins that mediate epigenetic repression. Mediates recruitment of the HUSH complex to H3K9me3 sites: the HUSH complex is recruited to genomic loci rich in H3K9me3 and is required to maintain transcriptional silencing by promoting recruitment of SETDB1, a histone methyltransferase that mediates further deposition of H3K9me3, as well as MORC2. Binds H3K9me and promotes DNA methylation by recruiting DNMT3A to target CpG sites; these can be situated within the coding region of the gene. Mediates down-regulation of CDH1 expression. Also represses L1 retrotransposons in collaboration with MORC2 and, probably, SETDB1, the silencing is dependent of repressive epigenetic modifications, such as H3K9me3 mark. Silencing events often occur within introns of transcriptionally active genes, and lead to the down-regulation of host gene expression. The HUSH complex is also involved in the silencing of unintegrated retroviral DNA by being recruited by ZNF638: some part of the retroviral DNA formed immediately after infection remains unintegrated in the host genome and is transcriptionally repressed. This chain is M-phase phosphoprotein 8, found in Homo sapiens (Human).